Consider the following 379-residue polypeptide: Probable homogentisate phytyltransferase 2, chloroplastic (379 aa).

The disordered stretch occupies residues 1-39; that stretch reads MASLASPPLPCRAAATASRSGRPAPRLLGPPPPPASPLL. The N-terminal 65 residues, 1–65, are a transit peptide targeting the chloroplast; that stretch reads MASLASPPLP…WSRRDAVRVC (65 aa). Helical transmembrane passes span 121-141, 174-194, 195-215, 220-240, 252-272, 299-319, 328-348, and 361-378; these read WLVFKAFYGLVALICGNGYIV, LVVLFAAAGFSIVVTNFGPFI, TSLYCLGLFLGTIYSVPPFRL, VAAFLIIATVRGFLLNFGVYY, WSSPVAFITCFVTLFALVIAI, IAFLGSGLLIANYVAAIAVAF, TVMVPVHAALAVGIIFQTWVL, and YYRFIWNLFYAEYIFFPL.

The protein belongs to the UbiA prenyltransferase family.

The protein resides in the plastid. It localises to the chloroplast thylakoid membrane. The enzyme catalyses phytyl diphosphate + homogentisate + H(+) = 2-methyl-6-phytyl-1,4-benzene-1,4-diol + CO2 + diphosphate. The protein operates within cofactor biosynthesis; tocopherol biosynthesis. Functionally, involved in the synthesis of tocopherol (vitamin E). Catalyzes the condensation of homogentisate and phytyl diphosphate to form dimethylphytylhydrquinone. This Oryza sativa subsp. japonica (Rice) protein is Probable homogentisate phytyltransferase 2, chloroplastic (HPT2).